The sequence spans 124 residues: Small ribosomal subunit protein uS12 (124 aa).

At D89 the chain carries 3-methylthioaspartic acid.

Belongs to the universal ribosomal protein uS12 family. Part of the 30S ribosomal subunit. Contacts proteins S8 and S17. May interact with IF1 in the 30S initiation complex.

In terms of biological role, with S4 and S5 plays an important role in translational accuracy. Its function is as follows. Interacts with and stabilizes bases of the 16S rRNA that are involved in tRNA selection in the A site and with the mRNA backbone. Located at the interface of the 30S and 50S subunits, it traverses the body of the 30S subunit contacting proteins on the other side and probably holding the rRNA structure together. The combined cluster of proteins S8, S12 and S17 appears to hold together the shoulder and platform of the 30S subunit. The sequence is that of Small ribosomal subunit protein uS12 from Edwardsiella ictaluri (strain 93-146).